Consider the following 187-residue polypeptide: UPF0301 protein PC1_3712 (187 aa).

It belongs to the UPF0301 (AlgH) family.

The polypeptide is UPF0301 protein PC1_3712 (Pectobacterium carotovorum subsp. carotovorum (strain PC1)).